Reading from the N-terminus, the 220-residue chain is Deoxyribose-phosphate aldolase (220 aa).

The Proton donor/acceptor role is filled by aspartate 89. Lysine 151 serves as the catalytic Schiff-base intermediate with acetaldehyde. Lysine 180 (proton donor/acceptor) is an active-site residue.

The protein belongs to the DeoC/FbaB aldolase family. DeoC type 1 subfamily.

Its subcellular location is the cytoplasm. It catalyses the reaction 2-deoxy-D-ribose 5-phosphate = D-glyceraldehyde 3-phosphate + acetaldehyde. Its pathway is carbohydrate degradation; 2-deoxy-D-ribose 1-phosphate degradation; D-glyceraldehyde 3-phosphate and acetaldehyde from 2-deoxy-alpha-D-ribose 1-phosphate: step 2/2. Catalyzes a reversible aldol reaction between acetaldehyde and D-glyceraldehyde 3-phosphate to generate 2-deoxy-D-ribose 5-phosphate. The sequence is that of Deoxyribose-phosphate aldolase from Lactococcus lactis subsp. cremoris (strain SK11).